Here is a 164-residue protein sequence, read N- to C-terminus: ATP synthase subunit b (164 aa).

The helical transmembrane segment at 10-32 (SAAMLMLFVLMVYFLNKFLYTPF) threads the bilayer.

This sequence belongs to the ATPase B chain family. In terms of assembly, F-type ATPases have 2 components, F(1) - the catalytic core - and F(0) - the membrane proton channel. F(1) has five subunits: alpha(3), beta(3), gamma(1), delta(1), epsilon(1). F(0) has three main subunits: a(1), b(2) and c(10-14). The alpha and beta chains form an alternating ring which encloses part of the gamma chain. F(1) is attached to F(0) by a central stalk formed by the gamma and epsilon chains, while a peripheral stalk is formed by the delta and b chains.

It localises to the cell inner membrane. F(1)F(0) ATP synthase produces ATP from ADP in the presence of a proton or sodium gradient. F-type ATPases consist of two structural domains, F(1) containing the extramembraneous catalytic core and F(0) containing the membrane proton channel, linked together by a central stalk and a peripheral stalk. During catalysis, ATP synthesis in the catalytic domain of F(1) is coupled via a rotary mechanism of the central stalk subunits to proton translocation. Functionally, component of the F(0) channel, it forms part of the peripheral stalk, linking F(1) to F(0). In Thermotoga maritima (strain ATCC 43589 / DSM 3109 / JCM 10099 / NBRC 100826 / MSB8), this protein is ATP synthase subunit b.